The primary structure comprises 523 residues: Cyclin-dependent kinase 17 (523 aa).

S9 is modified (phosphoserine). The tract at residues 30-55 (TIEESSSKDNEPIVKNGRPPTSHSVH) is disordered. Phosphoserine is present on residues S80, S92, and S105. The interval 103 to 123 (MGSDGESDQASGTSSDEVQSP) is disordered. Residues 110–123 (DQASGTSSDEVQSP) show a composition bias toward polar residues. Phosphoserine occurs at positions 137, 146, 165, and 180. The Protein kinase domain occupies 192 to 473 (YIKLEKLGEG…AEEAMKHVYF (282 aa)). Residues 198 to 206 (LGEGTYATV) and K221 contribute to the ATP site. Residue D313 is the Proton acceptor of the active site. The interval 501–523 (PGFRNSSYPETGHGKNRRQSMLF) is disordered. Basic residues predominate over residues 514 to 523 (GKNRRQSMLF).

Belongs to the protein kinase superfamily. CMGC Ser/Thr protein kinase family. CDC2/CDKX subfamily. As to quaternary structure, found in a complex containing CABLES1, CDK16 and TDRD7. Interacts with TDRD7.

It catalyses the reaction L-seryl-[protein] + ATP = O-phospho-L-seryl-[protein] + ADP + H(+). It carries out the reaction L-threonyl-[protein] + ATP = O-phospho-L-threonyl-[protein] + ADP + H(+). Its function is as follows. May play a role in terminally differentiated neurons. Has a Ser/Thr-phosphorylating activity for histone H1. The chain is Cyclin-dependent kinase 17 (Cdk17) from Mus musculus (Mouse).